We begin with the raw amino-acid sequence, 1502 residues long: Heme-responsive zinc finger transcription factor HAP1 (1502 aa).

The segment covering 1 to 50 has biased composition (polar residues); sequence MSNTPYNSSVPSIASMTQSSVSRSPNMHTATTPGANTSSNSPPLHMSSDS. The tract at residues 1–56 is disordered; it reads MSNTPYNSSVPSIASMTQSSVSRSPNMHTATTPGANTSSNSPPLHMSSDSSKIKRK. The Zn(2+) site is built by Cys-64, Cys-67, Cys-74, Cys-81, Cys-84, and Cys-93. The segment at residues 64 to 93 is a DNA-binding region (zn(2)-C6 fungal-type); it reads CTICRKRKVKCDKLRPHCQQCTKTGVAHLC. Residues 105 to 134 are a coiled coil; it reads EKELLKDNELKKLRERVKSLEKTLSKVHSS. A disordered region spans residues 126–208; that stretch reads KTLSKVHSSP…ANSSSLSISN (83 aa). Over residues 130–142 the composition is skewed to low complexity; the sequence is KVHSSPSSNSLKS. Polar residues-rich tracts occupy residues 143–152 and 160–176; these read YNTPESSNLF and TLVN…SHMH. The span at 177–208 shows a compositional bias: low complexity; that stretch reads QQQQQQQQQEQQQDFSRSANANANSSSLSISN. Positions 244-444 are heme-responsive; required for HMC formation; it reads KGDPYLKLLW…NTIPHHQPQS (201 aa). HRM repeat units lie at residues 280–285, 299–304, 323–328, 347–352, 389–394, and 415–420; these read KCPINH, KCPVDH, RCPVDH, and RCPIDH. Polar residues-rich tracts occupy residues 432-447 and 706-734; these read STHN…SGSH and QLNA…NPTL. Disordered stretches follow at residues 432 to 458 and 706 to 767; these read STHN…SRKH and QLNA…KENQ. The span at 735–759 shows a compositional bias: low complexity; sequence NNNMSAATTNSSSRSGSADSRSGSN. The stretch at 1192–1197 is one HRM 7 repeat; the sequence is KCPVYQ. Positions 1384–1411 are disordered; sequence TANTDTSANGSALSTLTSPQGSDLASNS. Polar residues predominate over residues 1388 to 1411; it reads DTSANGSALSTLTSPQGSDLASNS.

Binds DNA as a homodimer. Interacts with SRO9 and YDJ1. In the absence of heme, binds to at least four cellular proteins, including YDJ1 and SRO9, forming a high-molecular-weight complex (HMC) which results in repression of its activity and dictates its DNA-binding specificity.

It localises to the nucleus. In terms of biological role, regulation of oxygen dependent gene expression. It modulates the expression of Iso-1 (CYP1) and Iso-2 (CYP3) cytochrome c. In response to heme, promotes transcription of genes encoding functions required for respiration, controlling oxidative damage and repression of anaerobic genes. Binds to the sequence 5'-CGGNNNTNNCGG-3'. Is non-functional in terms of iso-1 cytochrome c expression in strain S288c and its derivatives. The chain is Heme-responsive zinc finger transcription factor HAP1 (HAP1) from Saccharomyces cerevisiae (strain ATCC 204508 / S288c) (Baker's yeast).